Here is a 255-residue protein sequence, read N- to C-terminus: uncharacterized protein (255 aa).

The first 23 residues, 1 to 23 (MKRLNKLVLYISFLILVISFTAG), serve as a signal peptide directing secretion. Residue cysteine 24 is the site of N-palmitoyl cysteine attachment. A lipid anchor (S-diacylglycerol cysteine) is attached at cysteine 24.

It belongs to the staphylococcal tandem lipoprotein family.

It is found in the cell membrane. This is an uncharacterized protein from Staphylococcus aureus (strain N315).